Here is a 121-residue protein sequence, read N- to C-terminus: MARIAGVDLPRDKRIVIGLTYIFGIGNTTAQKILANAGVSEDIRVRDLTPDQEEKIRAEVDQIKVEGDLRREVSLNIKRLQEIGSYRGMRHRHGLPVRGQHTKNNARTRKGKAVAIAGKKK.

The tract at residues 90-121 (RHRHGLPVRGQHTKNNARTRKGKAVAIAGKKK) is disordered.

It belongs to the universal ribosomal protein uS13 family. In terms of assembly, part of the 30S ribosomal subunit. Forms a loose heterodimer with protein S19. Forms two bridges to the 50S subunit in the 70S ribosome.

In terms of biological role, located at the top of the head of the 30S subunit, it contacts several helices of the 16S rRNA. In the 70S ribosome it contacts the 23S rRNA (bridge B1a) and protein L5 of the 50S subunit (bridge B1b), connecting the 2 subunits; these bridges are implicated in subunit movement. Contacts the tRNAs in the A and P-sites. The polypeptide is Small ribosomal subunit protein uS13 (Limosilactobacillus fermentum (strain NBRC 3956 / LMG 18251) (Lactobacillus fermentum)).